A 581-amino-acid polypeptide reads, in one-letter code: Alpha-amylase 2 (581 aa).

The first 24 residues, Met1–Ala24, serve as a signal peptide directing secretion. Cys56 and Cys64 form a disulfide bridge. Trp109 is a binding site for substrate. Asn147 serves as a coordination point for Ca(2+). The cysteines at positions 176 and 191 are disulfide-linked. Ca(2+) is bound at residue Asp202. Position 231 (Arg231) interacts with substrate. The Ca(2+) site is built by Asp233, His237, and Glu257. Asp233 functions as the Nucleophile in the catalytic mechanism. Position 236–237 (Lys236–His237) interacts with substrate. Glu257 acts as the Proton donor in catalysis. Gly261 is a binding site for substrate. A disulfide bond links Cys267 and Cys311. Asn291 carries an N-linked (GlcNAc...) asparagine glycan. Residue Asp325 coordinates substrate. The N-linked (GlcNAc...) asparagine glycan is linked to Asn332. Substrate is bound at residue Arg372. Ser551 is lipidated: GPI-anchor amidated serine. Residues Glu552–Ile581 constitute a propeptide, removed in mature form.

The protein belongs to the glycosyl hydrolase 13 family. Ca(2+) is required as a cofactor.

Its subcellular location is the cell membrane. The catalysed reaction is Endohydrolysis of (1-&gt;4)-alpha-D-glucosidic linkages in polysaccharides containing three or more (1-&gt;4)-alpha-linked D-glucose units.. The protein is Alpha-amylase 2 (aah2) of Schizosaccharomyces pombe (strain 972 / ATCC 24843) (Fission yeast).